Reading from the N-terminus, the 293-residue chain is Proline iminopeptidase (293 aa).

An AB hydrolase-1 domain is found at 28 to 277; it reads PLVLLHGGPG…NCGHMSFVEK (250 aa). S105 functions as the Nucleophile in the catalytic mechanism. Residue D244 is part of the active site. The active-site Proton donor is H271.

It belongs to the peptidase S33 family.

The protein localises to the cell envelope. It catalyses the reaction Release of N-terminal proline from a peptide.. Its function is as follows. Releases the N-terminal proline from various substrates. In Lactobacillus crispatus (strain ST1), this protein is Proline iminopeptidase.